A 1964-amino-acid polypeptide reads, in one-letter code: Neurogenic locus notch homolog protein 4 (1964 aa).

Residues 1–20 form the signal peptide; sequence MQPQLLLLLLLPLNFPVILT. EGF-like domains lie at 21–60, 61–112, 115–152, and 153–189; these read RELL…ETCQ, FPDP…DRCQ, LEEL…EQCQ, and LRDF…HTCE. Residues 21 to 1443 lie on the Extracellular side of the membrane; that stretch reads RELLCGGSPE…TRPSANQLPW (1423 aa). Disulfide bonds link C25/C38, C32/C48, C50/C59, C65/C77, C71/C100, C102/C111, C119/C130, C124/C140, C142/C151, C157/C168, C162/C177, C179/C188, C195/C208, C202/C217, C219/C228, C235/C246, C240/C259, C261/C270, C277/C288, C282/C297, C299/C308, C315/C329, C323/C338, C340/C349, C356/C367, C361/C376, C378/C387, C393/C404, C398/C415, C417/C426, C433/C449, C443/C458, C460/C469, C476/C487, C481/C496, C498/C507, C514/C525, C519/C534, C536/C545, C552/C563, C557/C572, C574/C583, C590/C601, C595/C610, C612/C621, C626/C637, C631/C646, C648/C655, C662/C669, C664/C674, C676/C685, C692/C703, C697/C712, C714/C723, C730/C741, C735/C750, C752/C761, C768/C779, C773/C788, C790/C799, C807/C818, C812/C827, C829/C838, C845/C856, C850/C865, C867/C876, C882/C903, C897/C912, C914/C923, C930/C941, C935/C950, C952/C961, C968/C979, C973/C988, C990/C999, C1006/C1019, C1011/C1028, C1030/C1039, C1046/C1057, C1051/C1069, C1071/C1080, C1087/C1098, C1092/C1110, C1112/C1121, C1130/C1142, C1136/C1155, C1157/C1166, C1174/C1187, C1183/C1199, C1210/C1234, C1216/C1229, C1225/C1241, C1247/C1273, C1255/C1268, and C1264/C1280. The region spanning 191–229 is the EGF-like 5; calcium-binding domain; that stretch reads DINECFLEPGPCPQGTSCHNTLGSYQCLCPVGQEGPQCK. The region spanning 231 to 271 is the EGF-like 6 domain; that stretch reads RKGACPPGSCLNGGTCQLVPEGHSTFHLCLCPPGFTGLDCE. Residues 273-309 form the EGF-like 7; calcium-binding domain; it reads NPDDCVRHQCQNGATCLDGLDTYTCLCPKTWKGWDCS. The region spanning 311 to 350 is the EGF-like 8; calcium-binding domain; it reads DIDECEARGPPRCRNGGTCQNTAGSFHCVCVSGWGGAGCE. Residues 352–388 form the EGF-like 9; calcium-binding domain; the sequence is NLDDCAAATCAPGSTCIDRVGSFSCLCPPGRTGLLCH. The EGF-like 10 domain occupies 389 to 427; sequence LEDMCLSQPCHVNAQCSTNPLTGSTLCICQPGYSGSTCH. Residues 429-470 enclose the EGF-like 11; calcium-binding domain; the sequence is DLDECQMAQQGPSPCEHGGSCINTPGSFNCLCLPGYTGSRCE. Residues 472 to 508 enclose the EGF-like 12; calcium-binding domain; the sequence is DHNECLSQPCHPGSTCLDLLATFHCLCPPGLEGRLCE. An EGF-like 13; calcium-binding domain is found at 510–546; sequence EVNECTSNPCLNQAACHDLLNGFQCLCLPGFTGARCE. Residues 548-584 form the EGF-like 14; calcium-binding domain; sequence DMDECSSTPCANGGRCRDQPGAFYCECLPGFEGPHCE. The EGF-like 15; calcium-binding domain occupies 586–622; it reads EVDECLSDPCPVGASCLDLPGAFFCLCRPGFTGQLCE. EGF-like domains follow at residues 623–656, 658–686, 688–724, 726–762, 764–800, 803–839, 841–877, 878–924, 926–962, 964–1000, 1002–1040, 1042–1081, 1083–1122, and 1126–1167; these read VPLC…PGCV, AEDN…PECE, ELGG…LTCS, EVTA…RHCQ, AVDH…LHCE, TNPS…SSCQ, LIDL…ALCD, FPLS…KLCQ, NVNP…QNCS, VLDA…LRCE, DVDE…QRCE, EMDL…PTCS, KALS…PDCL, and APPG…PRCQ. Residue N711 is glycosylated (N-linked (GlcNAc...) asparagine). N-linked (GlcNAc...) asparagine glycosylation occurs at N960. N1139 carries N-linked (GlcNAc...) asparagine glycosylation. LNR repeat units lie at residues 1166-1209, 1210-1241, and 1247-1287; these read CQRP…PWKG, CPPH…GYDC, and CIPA…GEDS. Positions 1345 to 1369 are disordered; sequence EELSGARDSSSWERQAPPTQPLGKE. Residues 1444–1464 traverse the membrane as a helical segment; it reads PILCSPVVGVLLLALGALLVL. Residues 1465-1964 are Cytoplasmic-facing; it reads QLIRRRRREH…PLNSVVRNLN (500 aa). The segment at 1516 to 1535 is disordered; that stretch reads VDEDGVAMCSGPEEGEAEET. ANK repeat units follow at residues 1628 to 1657, 1661 to 1691, 1695 to 1724, 1728 to 1757, and 1761 to 1790; these read TGET…NPNQ, AGRT…TVDA, DGTT…DVGA, RGKT…DKDA, and REQT…ARGL. Residues 1879–1907 are disordered; it reads RSGSCGGPTTRGRRFSAGSRGRRGARASQ.

Belongs to the NOTCH family. In terms of assembly, heterodimer of a C-terminal fragment N(TM) and a N-terminal fragment N(EC) which are probably linked by disulfide bonds. Interacts with MAML1, MAML2 and MAML3 which act as transcriptional coactivators for NOTCH4. In terms of processing, synthesized in the endoplasmic reticulum as an inactive form which is proteolytically cleaved by a furin-like convertase in the trans-Golgi network before it reaches the plasma membrane to yield an active, ligand-accessible form. Cleavage results in a C-terminal fragment N(TM) and a N-terminal fragment N(EC). Following ligand binding, it is cleaved by TNF-alpha converting enzyme (TACE) to yield a membrane-associated intermediate fragment called notch extracellular truncation (NEXT). This fragment is then cleaved by presenilin dependent gamma-secretase to release a notch-derived peptide containing the intracellular domain (NICD) from the membrane. Post-translationally, phosphorylated. As to expression, highly expressed in lung, moderately in heart kidney, and at lower levels in the ovary and skeletal muscle. A very low expression is seen in the brain, intestine, liver and testis.

It localises to the cell membrane. Its subcellular location is the nucleus. In terms of biological role, functions as a receptor for membrane-bound ligands Jagged1, Jagged2 and Delta1 to regulate cell-fate determination. Upon ligand activation through the released notch intracellular domain (NICD) it forms a transcriptional activator complex with RBPJ/RBPSUH and activates genes of the enhancer of split locus. Affects the implementation of differentiation, proliferation and apoptotic programs. May regulate branching morphogenesis in the developing vascular system. The protein is Neurogenic locus notch homolog protein 4 of Mus musculus (Mouse).